A 305-amino-acid chain; its full sequence is Large ribosomal subunit protein uL2m (305 aa).

A mitochondrion-targeting transit peptide spans 1 to 60 (MALCALTRALRSLNLAPPTVAAPAPSLFPAAQMMNNGLLQQPSALMLLPCRPVLTSVALN). A disordered region spans residues 264 to 283 (RWLGKRPNSGRWHRKGGWAG). Basic residues predominate over residues 274 to 283 (RWHRKGGWAG).

Belongs to the universal ribosomal protein uL2 family. Component of the mitochondrial large ribosomal subunit (mt-LSU). Mature mammalian 55S mitochondrial ribosomes consist of a small (28S) and a large (39S) subunit. The 28S small subunit contains a 12S ribosomal RNA (12S mt-rRNA) and 30 different proteins. The 39S large subunit contains a 16S rRNA (16S mt-rRNA), a copy of mitochondrial valine transfer RNA (mt-tRNA(Val)), which plays an integral structural role, and 52 different proteins.

The protein resides in the mitochondrion. The protein is Large ribosomal subunit protein uL2m (MRPL2) of Homo sapiens (Human).